A 120-amino-acid polypeptide reads, in one-letter code: Large ribosomal subunit protein bL19 (120 aa).

It belongs to the bacterial ribosomal protein bL19 family.

Functionally, this protein is located at the 30S-50S ribosomal subunit interface and may play a role in the structure and function of the aminoacyl-tRNA binding site. This chain is Large ribosomal subunit protein bL19, found in Kocuria rhizophila (strain ATCC 9341 / DSM 348 / NBRC 103217 / DC2201).